A 360-amino-acid chain; its full sequence is Epoxyqueuosine reductase (360 aa).

Asp142 functions as the Proton donor in the catalytic mechanism. Positions 187–216 constitute a 4Fe-4S ferredoxin-type domain; that stretch reads APTEPVTAHCGSCQACMDVCPTQAIVAPHR. The [4Fe-4S] cluster site is built by Cys196, Cys199, Cys202, Cys206, Cys222, Cys249, Cys252, and Cys256.

This sequence belongs to the QueG family. As to quaternary structure, monomer. It depends on cob(II)alamin as a cofactor. Requires [4Fe-4S] cluster as cofactor.

Its subcellular location is the cytoplasm. The enzyme catalyses epoxyqueuosine(34) in tRNA + AH2 = queuosine(34) in tRNA + A + H2O. It functions in the pathway tRNA modification; tRNA-queuosine biosynthesis. Its function is as follows. Catalyzes the conversion of epoxyqueuosine (oQ) to queuosine (Q), which is a hypermodified base found in the wobble positions of tRNA(Asp), tRNA(Asn), tRNA(His) and tRNA(Tyr). The protein is Epoxyqueuosine reductase of Alicycliphilus denitrificans (strain DSM 14773 / CIP 107495 / K601).